Here is a 713-residue protein sequence, read N- to C-terminus: Nuclear poly(A) polymerase 1 (713 aa).

ATP-binding positions include Phe-91 to Ser-93, Ala-103 to Asp-106, Asp-159, Tyr-229, and Gly-238 to Ile-239. Positions 104, 106, and 159 each coordinate Mg(2+). The tract at residues Phe-480–Lys-555 is disordered. A compositionally biased stretch (low complexity) spans Ser-507–Ser-526.

It belongs to the poly(A) polymerase family. Monomer. Forms a complex with cleavage and polyadenylation specificity factor (CPSF) subunit PAPS4. Requires Mg(2+) as cofactor. It depends on Mn(2+) as a cofactor. In terms of tissue distribution, expressed in stems, cotyledons, hypocotyls, radicle, leaves, and, to a lower extent, in roots (including primary and secondary roots as well as root tips) and flowers. In radicle, roots and leaves, mainly present in vascular tissues.

It localises to the nucleus. The enzyme catalyses RNA(n) + ATP = RNA(n)-3'-adenine ribonucleotide + diphosphate. Functionally, essential protein. Polymerase that creates the 3'-poly(A) tail of mRNA's. Also required for the endoribonucleolytic cleavage reaction at some polyadenylation sites. May acquire specificity through interaction with a cleavage and polyadenylation specificity factor (CPSF) at its C-terminus. This is Nuclear poly(A) polymerase 1 from Arabidopsis thaliana (Mouse-ear cress).